The sequence spans 177 residues: Large ribosomal subunit protein uL5 (177 aa).

It belongs to the universal ribosomal protein uL5 family. In terms of assembly, part of the 50S ribosomal subunit; contacts the 5S rRNA and probably tRNA. Forms a bridge to the 30S subunit in the 70S ribosome.

This is one of the proteins that bind and probably mediate the attachment of the 5S RNA into the large ribosomal subunit, where it forms part of the central protuberance. In the 70S ribosome it contacts protein S13 of the 30S subunit (bridge B1b), connecting the 2 subunits; this bridge is implicated in subunit movement. May contact the P site tRNA; the 5S rRNA and some of its associated proteins might help stabilize positioning of ribosome-bound tRNAs. The chain is Large ribosomal subunit protein uL5 from Sulfurisphaera tokodaii (strain DSM 16993 / JCM 10545 / NBRC 100140 / 7) (Sulfolobus tokodaii).